Consider the following 218-residue polypeptide: MPLPDTMFCAQQIHIPPELTDILKQFTKAAIRTQPADVLQWSAGYFSALSRGDPLPVKDRIEMPMATQKTDTGLTQGLLKVLHKQCSHKEYVDLADLEQKWKNLCLPVEKFRALLQLDPCEDKIEWIKFLALGCSMLGGSLNTAMKHLCEILTTDPEGGPARIPFGTFSYVYRYLSGLDSDIPESDTEAYLSSLKENAAARKNGMIGLSDFFVLKRKI.

Residues 17 to 46 (PELTDILKQFTKAAIRTQPADVLQWSAGYF) enclose the RIIa domain.

The protein belongs to the ropporin family. Component of the axonemal radial spoke complex 1 (RS1), at least composed of spoke head proteins RSPH1, RSPH3, RSPH9 and the cilia-specific component RSPH4A or sperm-specific component RSPH6A, spoke stalk proteins RSPH14, DNAJB13, DYDC1, ROPN1L and NME5, and the anchor protein IQUB. May interact with AKAP3. Interacts with FSCB; the interaction increases upon spermatozoa capacitation conditions. Interacts with CFAP61. Sumoylated, sumoylation decreases upon spermatozoa capacitation conditions.

The protein localises to the cell projection. It localises to the cilium. It is found in the flagellum. In terms of biological role, functions as part of axonemal radial spoke complexes that play an important part in the motility of sperm and cilia. Important for male fertility. With ROPN1, involved in fibrous sheath integrity and sperm motility, plays a role in PKA-dependent signaling processes required for spermatozoa capacitation. The polypeptide is Ropporin-1-like protein (ROPN1L) (Bos taurus (Bovine)).